The primary structure comprises 197 residues: MPKDAPAGLAPGFLVAAPALADPNFNGSLVLMAEHHAQGALGFVVNRPGPITVADVLGGLDERLRERAEGAGRADDPVLVGGPVQPERLWILFRPGPTAPEEGAVALGSGLALGGSRELLEALVRSRDPGPYLLLLGYAGWAPLQIEHEVGEGAWVPLPLQGDLVFDVPMEKRWETAVRRLGLDPAGFLVGGGGAEA.

It belongs to the UPF0301 (AlgH) family.

The sequence is that of UPF0301 protein Adeh_3962 from Anaeromyxobacter dehalogenans (strain 2CP-C).